We begin with the raw amino-acid sequence, 351 residues long: Photosystem II D2 protein (351 aa).

The chain crosses the membrane as a helical span at residues 39–59; it reads TAYLSIGGWLTGTTFVTSWYT. His116 is a binding site for chlorophyll a. Residues 123–139 traverse the membrane as a helical segment; that stretch reads GFMLRQFEIARLVGIRP. Pheophytin a contacts are provided by Gln128 and Asn141. Residues 151 to 164 form a helical membrane-spanning segment; it reads VFVSVFLMYPLGQS. His196 is a chlorophyll a binding site. A helical membrane pass occupies residues 206-226; that stretch reads GALLCAIHGATVENTLFEDGE. Positions 213 and 260 each coordinate a plastoquinone. His213 is a Fe cation binding site. His267 contacts Fe cation. A helical membrane pass occupies residues 277-293; that stretch reads GLWTSAIGIIGLALNLR.

This sequence belongs to the reaction center PufL/M/PsbA/D family. PSII is composed of 1 copy each of membrane proteins PsbA, PsbB, PsbC, PsbD, PsbE, PsbF, PsbH, PsbI, PsbJ, PsbK, PsbL, PsbM, PsbT, PsbX, PsbY, PsbZ, Psb30/Ycf12, peripheral proteins PsbO, CyanoQ (PsbQ), PsbU, PsbV and a large number of cofactors. It forms dimeric complexes. It depends on The D1/D2 heterodimer binds P680, chlorophylls that are the primary electron donor of PSII, and subsequent electron acceptors. It shares a non-heme iron and each subunit binds pheophytin, quinone, additional chlorophylls, carotenoids and lipids. There is also a Cl(-1) ion associated with D1 and D2, which is required for oxygen evolution. The PSII complex binds additional chlorophylls, carotenoids and specific lipids. as a cofactor.

It localises to the cellular thylakoid membrane. It carries out the reaction 2 a plastoquinone + 4 hnu + 2 H2O = 2 a plastoquinol + O2. Photosystem II (PSII) is a light-driven water:plastoquinone oxidoreductase that uses light energy to abstract electrons from H(2)O, generating O(2) and a proton gradient subsequently used for ATP formation. It consists of a core antenna complex that captures photons, and an electron transfer chain that converts photonic excitation into a charge separation. The D1/D2 (PsbA/PsbD) reaction center heterodimer binds P680, the primary electron donor of PSII as well as several subsequent electron acceptors. D2 is needed for assembly of a stable PSII complex. The sequence is that of Photosystem II D2 protein from Synechococcus sp. (strain CC9311).